The primary structure comprises 372 residues: Actin-related protein 2/3 complex subunit 1B (372 aa).

6 WD repeats span residues 6–45, 50–89, 94–135, 140–179, 242–280, and 324–367; these read FLVE…WVQV, EHNG…WKPT, RINR…WVCK, PIRS…VEER, SETL…GKLS, and LHKN…SALK.

The protein belongs to the WD repeat ARPC1 family. As to quaternary structure, component of the Arp2/3 complex composed of ACTR2/ARP2, ACTR3/ARP3, ARPC1B/p41-ARC, ARPC2/p34-ARC, ARPC3/p21-ARC, ARPC4/p20-ARC and ARPC5/p16-ARC.

The protein localises to the cytoplasm. It localises to the cytoskeleton. It is found in the nucleus. In terms of biological role, component of the Arp2/3 complex, a multiprotein complex that mediates actin polymerization upon stimulation by nucleation-promoting factor (NPF). The Arp2/3 complex mediates the formation of branched actin networks in the cytoplasm, providing the force for cell motility. In addition to its role in the cytoplasmic cytoskeleton, the Arp2/3 complex also promotes actin polymerization in the nucleus, thereby regulating gene transcription and repair of damaged DNA. The Arp2/3 complex promotes homologous recombination (HR) repair in response to DNA damage by promoting nuclear actin polymerization, leading to drive motility of double-strand breaks (DSBs). In Bos taurus (Bovine), this protein is Actin-related protein 2/3 complex subunit 1B (ARPC1B).